A 167-amino-acid chain; its full sequence is Small ribosomal subunit protein uS7c (167 aa).

Belongs to the universal ribosomal protein uS7 family. In terms of assembly, part of the 30S ribosomal subunit.

The protein localises to the plastid. It is found in the chloroplast. In terms of biological role, one of the primary rRNA binding proteins, it binds directly to 16S rRNA where it nucleates assembly of the head domain of the 30S subunit. This is Small ribosomal subunit protein uS7c (rps7) from Tetradesmus obliquus (Green alga).